Here is a 285-residue protein sequence, read N- to C-terminus: ATP synthase gamma chain (285 aa).

Belongs to the ATPase gamma chain family. F-type ATPases have 2 components, CF(1) - the catalytic core - and CF(0) - the membrane proton channel. CF(1) has five subunits: alpha(3), beta(3), gamma(1), delta(1), epsilon(1). CF(0) has three main subunits: a, b and c.

It is found in the cell membrane. Its function is as follows. Produces ATP from ADP in the presence of a proton gradient across the membrane. The gamma chain is believed to be important in regulating ATPase activity and the flow of protons through the CF(0) complex. The sequence is that of ATP synthase gamma chain from Clostridium novyi (strain NT).